The primary structure comprises 379 residues: Stimulator of interferon genes protein (379 aa).

The next 2 membrane-spanning stretches (helical) occupy residues 18 to 38 and 43 to 63; these read AKKA…DLGE and ILQW…FKGV. 2 S-palmitoyl cysteine lipidation sites follow: C88 and C91. Helical transmembrane passes span 89 to 109 and 114 to 134; these read LGCP…YTPF and HLPF…SILL. Residues 153-340 form a cyclic dinucleotide-binding domain (CBD) region; that stretch reads LNVAQGMAWS…RHLKQEEKEE (188 aa). Positions 162, 167, 238, and 263 each coordinate 2',3'-cGAMP. Residues S162, Y167, 238–241, and T263 each bind 3',3'-c-di-GMP; that span reads RVYT. Y167, R238, and T263 together coordinate 2',3'-cUAMP. The interval 338-363 is disordered; it reads KEEVTVDSARTSVMPDPSMLPQGPEL. The C-terminal tail (CTT) stretch occupies residues 340–379; sequence EVTVDSARTSVMPDPSMLPQGPELLISSMDQPLPLRTDVF. A Phosphoserine modification is found at S355. The pLxIS motif motif lies at 363–366; the sequence is LLIS. The residue at position 366 (S366) is a Phosphoserine; by TBK1.

It belongs to the STING family. In terms of assembly, homodimer; forms a homodimer in absence of cyclic nucleotide (c-di-GMP or cGAMP). Homotetramer; in presence of cyclic nucleotide (c-di-GMP or cGAMP), forms tetramers and higher-order oligomers through side-by-side packing. Interacts (when phosphorylated) with IRF3; following activation and phosphorylation on the pLxIS motif by TBK1, recruits IRF3. Interacts with TBK1; when homodimer, leading to subsequent production of IFN-beta. Interacts (via transmembrane domain) with TMEM203. Post-translationally, phosphorylation by TBK1 leads to activation and production of IFN-beta. Following cyclic nucleotide (c-di-GMP or cGAMP)-binding, activation and translocation from the endoplasmic reticulum, STING1 is phosphorylated by TBK1 at Ser-366 in the pLxIS motif. The phosphorylated pLxIS motif constitutes an IRF3-binding motif, leading to recruitment of the transcription factor IRF3 to induce type-I interferons and other cytokines. In contrast, lacks phosphorylation site at position 358, leading to reduced production of type-I interferons and other cytokines.

It is found in the endoplasmic reticulum membrane. It localises to the cytoplasm. The protein localises to the perinuclear region. Its subcellular location is the endoplasmic reticulum-Golgi intermediate compartment membrane. The protein resides in the golgi apparatus membrane. It is found in the cytoplasmic vesicle. It localises to the autophagosome membrane. The protein localises to the mitochondrion outer membrane. Its subcellular location is the cell membrane. It catalyses the reaction H(+)(in) = H(+)(out). Functionally, facilitator of innate immune signaling that acts as a sensor of cytosolic DNA from bacteria and viruses and promotes low production of type I interferon (IFN-alpha and IFN-beta). Compared to other mammals, STING1-dependent type I interferon induction is strongly reduced in bats, suggesting that the cGAS-STING pathway promotes a limited inflammatory response. Innate immune response is triggered in response to non-CpG double-stranded DNA from viruses and bacteria delivered to the cytoplasm. Acts by binding cyclic dinucleotides: recognizes and binds cyclic di-GMP (c-di-GMP), a second messenger produced by bacteria, cyclic UMP-AMP (2',3'-cUAMP), and cyclic GMP-AMP (cGAMP), a messenger produced by CGAS in response to DNA virus in the cytosol. Upon binding to c-di-GMP, cUAMP or cGAMP, STING1 oligomerizes, translocates from the endoplasmic reticulum and is phosphorylated by TBK1 on the pLxIS motif, leading to recruitment and subsequent activation of the transcription factor IRF3 to induce expression of type I interferon and exert a potent anti-viral state. In addition to promote the production of type I interferons, plays a direct role in autophagy. Following cGAMP-binding, STING1 buds from the endoplasmic reticulum into COPII vesicles, which then form the endoplasmic reticulum-Golgi intermediate compartment (ERGIC). The ERGIC serves as the membrane source for WIPI2 recruitment and LC3 lipidation, leading to formation of autophagosomes that target cytosolic DNA or DNA viruses for degradation by the lysosome. Promotes autophagy by acting as a proton channel that directs proton efflux from the Golgi to facilitate MAP1LC3B/LC3B lipidation. The autophagy- and interferon-inducing activities can be uncoupled and autophagy induction is independent of TBK1 phosphorylation. This chain is Stimulator of interferon genes protein, found in Pteronotus parnellii (Parnell's mustached bat).